We begin with the raw amino-acid sequence, 262 residues long: Adenosylcobinamide-GDP ribazoletransferase (262 aa).

6 consecutive transmembrane segments (helical) span residues 43 to 63 (YFGL…WLTQ), 66 to 86 (LPAG…TGGF), 120 to 140 (GALA…ELAL), 146 to 166 (AGSA…SIIF), 191 to 211 (LLIL…LAAL), and 242 to 262 (AAQQ…GNIL).

It belongs to the CobS family. It depends on Mg(2+) as a cofactor.

The protein resides in the cell inner membrane. It carries out the reaction alpha-ribazole + adenosylcob(III)inamide-GDP = adenosylcob(III)alamin + GMP + H(+). The catalysed reaction is alpha-ribazole 5'-phosphate + adenosylcob(III)inamide-GDP = adenosylcob(III)alamin 5'-phosphate + GMP + H(+). The protein operates within cofactor biosynthesis; adenosylcobalamin biosynthesis; adenosylcobalamin from cob(II)yrinate a,c-diamide: step 7/7. Functionally, joins adenosylcobinamide-GDP and alpha-ribazole to generate adenosylcobalamin (Ado-cobalamin). Also synthesizes adenosylcobalamin 5'-phosphate from adenosylcobinamide-GDP and alpha-ribazole 5'-phosphate. The sequence is that of Adenosylcobinamide-GDP ribazoletransferase from Shewanella baltica (strain OS185).